The following is a 269-amino-acid chain: 4-hydroxy-tetrahydrodipicolinate reductase (269 aa).

Residues 13–18 (GASGRM) and Asp-39 each bind NAD(+). Arg-40 contacts NADP(+). Residues 101–103 (GTT) and 125–128 (APNM) contribute to the NAD(+) site. His-158 serves as the catalytic Proton donor/acceptor. His-159 serves as a coordination point for (S)-2,3,4,5-tetrahydrodipicolinate. Residue Lys-162 is the Proton donor of the active site. Residue 168–169 (GT) coordinates (S)-2,3,4,5-tetrahydrodipicolinate.

Belongs to the DapB family.

It is found in the cytoplasm. The enzyme catalyses (S)-2,3,4,5-tetrahydrodipicolinate + NAD(+) + H2O = (2S,4S)-4-hydroxy-2,3,4,5-tetrahydrodipicolinate + NADH + H(+). It carries out the reaction (S)-2,3,4,5-tetrahydrodipicolinate + NADP(+) + H2O = (2S,4S)-4-hydroxy-2,3,4,5-tetrahydrodipicolinate + NADPH + H(+). It functions in the pathway amino-acid biosynthesis; L-lysine biosynthesis via DAP pathway; (S)-tetrahydrodipicolinate from L-aspartate: step 4/4. Its function is as follows. Catalyzes the conversion of 4-hydroxy-tetrahydrodipicolinate (HTPA) to tetrahydrodipicolinate. This is 4-hydroxy-tetrahydrodipicolinate reductase from Bordetella pertussis (strain Tohama I / ATCC BAA-589 / NCTC 13251).